The primary structure comprises 103 residues: Putative double-stranded DNA mimic protein HD_0986 (103 aa).

The protein belongs to the putative dsDNA mimic protein family.

Functionally, may act as a double-stranded DNA (dsDNA) mimic. Probably regulates the activity of a dsDNA-binding protein. This is Putative double-stranded DNA mimic protein HD_0986 from Haemophilus ducreyi (strain 35000HP / ATCC 700724).